Reading from the N-terminus, the 387-residue chain is Xylose isomerase (387 aa).

Active-site residues include histidine 54 and aspartate 57. Mg(2+) contacts are provided by glutamate 181, glutamate 217, histidine 220, aspartate 245, aspartate 255, aspartate 257, and aspartate 287.

This sequence belongs to the xylose isomerase family. As to quaternary structure, homotetramer. Mg(2+) is required as a cofactor.

Its subcellular location is the cytoplasm. It catalyses the reaction alpha-D-xylose = alpha-D-xylulofuranose. The polypeptide is Xylose isomerase (Streptomyces coelicolor (strain ATCC BAA-471 / A3(2) / M145)).